Consider the following 205-residue polypeptide: Imidazoleglycerol-phosphate dehydratase (205 aa).

Belongs to the imidazoleglycerol-phosphate dehydratase family.

It localises to the cytoplasm. The catalysed reaction is D-erythro-1-(imidazol-4-yl)glycerol 3-phosphate = 3-(imidazol-4-yl)-2-oxopropyl phosphate + H2O. It functions in the pathway amino-acid biosynthesis; L-histidine biosynthesis; L-histidine from 5-phospho-alpha-D-ribose 1-diphosphate: step 6/9. This is Imidazoleglycerol-phosphate dehydratase from Chloroflexus aurantiacus (strain ATCC 29366 / DSM 635 / J-10-fl).